Consider the following 235-residue polypeptide: Ubiquinone/menaquinone biosynthesis C-methyltransferase UbiE (235 aa).

S-adenosyl-L-methionine is bound by residues Thr-60, Asp-81, and Ser-126.

The protein belongs to the class I-like SAM-binding methyltransferase superfamily. MenG/UbiE family.

It catalyses the reaction a 2-demethylmenaquinol + S-adenosyl-L-methionine = a menaquinol + S-adenosyl-L-homocysteine + H(+). It carries out the reaction a 2-methoxy-6-(all-trans-polyprenyl)benzene-1,4-diol + S-adenosyl-L-methionine = a 5-methoxy-2-methyl-3-(all-trans-polyprenyl)benzene-1,4-diol + S-adenosyl-L-homocysteine + H(+). It participates in quinol/quinone metabolism; menaquinone biosynthesis; menaquinol from 1,4-dihydroxy-2-naphthoate: step 2/2. The protein operates within cofactor biosynthesis; ubiquinone biosynthesis. In terms of biological role, methyltransferase required for the conversion of demethylmenaquinol (DMKH2) to menaquinol (MKH2) and the conversion of 2-polyprenyl-6-methoxy-1,4-benzoquinol (DDMQH2) to 2-polyprenyl-3-methyl-6-methoxy-1,4-benzoquinol (DMQH2). The sequence is that of Ubiquinone/menaquinone biosynthesis C-methyltransferase UbiE from Geobacter sp. (strain M21).